The primary structure comprises 178 residues: Small ribosomal subunit protein uS4 (178 aa).

In terms of domain architecture, S4 RNA-binding spans 104-166 (RRLQTLVYRK…PNSPMALENH (63 aa)).

It belongs to the universal ribosomal protein uS4 family. As to quaternary structure, part of the 30S ribosomal subunit. Contacts protein S5. The interaction surface between S4 and S5 is involved in control of translational fidelity.

Its function is as follows. One of the primary rRNA binding proteins, it binds directly to 16S rRNA where it nucleates assembly of the body of the 30S subunit. Functionally, with S5 and S12 plays an important role in translational accuracy. This Methanococcus vannielii (strain ATCC 35089 / DSM 1224 / JCM 13029 / OCM 148 / SB) protein is Small ribosomal subunit protein uS4.